The chain runs to 274 residues: ATP synthase subunit a (274 aa).

Transmembrane regions (helical) follow at residues 40 to 60 (FWVC…VILI), 110 to 130 (IFVW…LVPF), 149 to 169 (DVNI…FYSI), 224 to 244 (IFIL…SVPW), and 245 to 265 (AIFH…LTIV).

The protein belongs to the ATPase A chain family. In terms of assembly, F-type ATPases have 2 components, CF(1) - the catalytic core - and CF(0) - the membrane proton channel. CF(1) has five subunits: alpha(3), beta(3), gamma(1), delta(1), epsilon(1). CF(0) has three main subunits: a(1), b(2) and c(9-12). The alpha and beta chains form an alternating ring which encloses part of the gamma chain. CF(1) is attached to CF(0) by a central stalk formed by the gamma and epsilon chains, while a peripheral stalk is formed by the delta and b chains.

The protein localises to the cell membrane. Key component of the proton channel; it plays a direct role in the translocation of protons across the membrane. This chain is ATP synthase subunit a, found in Buchnera aphidicola subsp. Baizongia pistaciae (strain Bp).